The following is a 355-amino-acid chain: Myricetin 7/4'-O-methyltransferase 2 (355 aa).

Residue D221 participates in S-adenosyl-L-methionine binding. H259 serves as the catalytic Proton acceptor.

The protein belongs to the class I-like SAM-binding methyltransferase superfamily. Cation-independent O-methyltransferase family. As to quaternary structure, homodimer. As to expression, mainly expressed in leaves secreting glandular trichomes types 1 and 4 and, to a lesser extent, in storage trichomes type 6.

It carries out the reaction quercetin + S-adenosyl-L-methionine = rhamnetin + S-adenosyl-L-homocysteine + H(+). The enzyme catalyses kaempferol + S-adenosyl-L-methionine = kaempferide + S-adenosyl-L-homocysteine + H(+). It catalyses the reaction myricetin + S-adenosyl-L-methionine = 7-O-methylmyricetin + S-adenosyl-L-homocysteine + H(+). The catalysed reaction is kaempferide + S-adenosyl-L-methionine = 7,4'-O-dimethylkaempferol + S-adenosyl-L-homocysteine + H(+). It carries out the reaction isorhamnetin + S-adenosyl-L-methionine = 3',4'-O-dimethylquercetin + S-adenosyl-L-homocysteine + 2 H(+). The enzyme catalyses 3',4',5,7-tetrahydroxy-3-methoxyflavone + S-adenosyl-L-methionine = 3',4',5-trihydroxy-3,7-dimethoxyflavone + S-adenosyl-L-homocysteine + H(+). It catalyses the reaction rhamnetin + S-adenosyl-L-methionine = 7,4'-O-dimethylquercetin + S-adenosyl-L-homocysteine + H(+). The catalysed reaction is syringetin + S-adenosyl-L-methionine = 7,3',5'-O-trimethylmyricetin + S-adenosyl-L-homocysteine + H(+). It carries out the reaction 3',4',5'-O-trimethylmyricetin + S-adenosyl-L-methionine = 7,3',4',5'-O-tetramethylmyricetin + S-adenosyl-L-homocysteine. It participates in flavonoid metabolism. In terms of biological role, flavonoid 7/4'-O-methyltransferase involved in the biosynthesis of polymethoxylated flavonoids natural products such as myricetin derivatives, aroma compounds possessing antioxidant properties and exhibiting pharmacological activities such as anti-carcinogen, anti-viral, anti-thrombotic, anti-diabetic, anti-atherosclerotic, and anti-inflammatory effects. Catalyzes S-adenosylmethionine-dependent regioselective 7/4'-O-methylation of flavonoids; active on various hydroxylated flavonoid substrates, including myricetin, quercetin and kaempferol. Mediates the formation of 4'-methyl derivatives from kaempferol, 3'-methyl quercetin (isorhamnetin), 7-methyl quercetin (rhamnetin) and 3'-methyl myricetin, producing 4'-methyl kaempferol (kaempferide), 3',4'-dimethyl quercetin (4'-O-methyl isorhamnetin), 7,4'-dimethyl quercetin (4'-O-methyl rhamnetin, rhamnacene) and 3',4'-dimethyl myricetin, respectively. Triggers the 7-O-methylation of quercetin, myricetin, 4'-methyl kaempferol (kaempferide), 3-methyl quercetin, 3',5'-dimethyl myricetin (syringetin) and 3',4',5'-trimethyl myricetin, thus leading to production of 7-methyl quercetin (rhamnetin), 7-methyl myricetin, 7,4'-dimethyl kaempferol (7-O-methyl kaempferide), 3,7-dimethyl quercetin, 7,3',5'-trimethyl myricetin (7-O-methyl syringetin) and 7,3',4',5'-tetramethyl myricetin, respectively. This Solanum habrochaites (Wild tomato) protein is Myricetin 7/4'-O-methyltransferase 2.